Consider the following 117-residue polypeptide: Large ribosomal subunit protein eL34 (117 aa).

It belongs to the eukaryotic ribosomal protein eL34 family. Component of the large ribosomal subunit.

It localises to the cytoplasm. Its subcellular location is the cytosol. The protein localises to the endoplasmic reticulum. In terms of biological role, component of the large ribosomal subunit. The ribosome is a large ribonucleoprotein complex responsible for the synthesis of proteins in the cell. In Ictalurus punctatus (Channel catfish), this protein is Large ribosomal subunit protein eL34 (rpl34).